We begin with the raw amino-acid sequence, 221 residues long: MAIQLRVFYLVPLLLASYVQTTPRLEKMKMDCYKDVKGTIYNYEALSLNGKERIPFKQYAGKHVLFVNVATYCGLTIQYPELNALQDDLKQFGLVILGFPCNQFGKQEPGDNTEILPGLKYVRPGKGFLPNFQLFAKGDVNGEKEQEIFTFLKRSCPHPSETVVTSKHTFWEPIKVHDIRWNFEKFLVGPNGVPVMRWFHQAPVSTVKSDILAYLNQFKTI.

The N-terminal stretch at 1–21 (MAIQLRVFYLVPLLLASYVQT) is a signal peptide. C73 is an active-site residue.

Belongs to the glutathione peroxidase family. As to expression, epididymis.

The protein resides in the secreted. It carries out the reaction 2 glutathione + H2O2 = glutathione disulfide + 2 H2O. Its function is as follows. Protects cells and enzymes from oxidative damage, by catalyzing the reduction of hydrogen peroxide, lipid peroxides and organic hydroperoxide, by glutathione. May constitute a glutathione peroxidase-like protective system against peroxide damage in sperm membrane lipids. This chain is Epididymal secretory glutathione peroxidase (Gpx5), found in Rattus norvegicus (Rat).